The sequence spans 342 residues: UDP-N-acetylglucosamine transporter YEA4 (342 aa).

Residues 1-6 (MWNSLK) are Cytoplasmic-facing. The helical transmembrane segment at 7-27 (AFALVFGGCCSNVITFETLMS) threads the bilayer. The Lumenal segment spans residues 28–35 (NETGSINN). Residues 36 to 56 (LITFCQFLFVTCQGLPEFLDV) form a helical membrane-spanning segment. The Cytoplasmic portion of the chain corresponds to 57-61 (HQPFP). The chain crosses the membrane as a helical span at residues 62–82 (YFKPLKTPLHVYVITVVLFYI). Residues 83–96 (SSTTNNNVFKYNIS) lie on the Lumenal side of the membrane. A helical membrane pass occupies residues 97-117 (IPIHIVFRCFGTVITMFTCWL). Topologically, residues 118–123 (LNGRKY) are cytoplasmic. The helical transmembrane segment at 124–144 (TKIQILSTLFLTIGAIIASLF) threads the bilayer. Residues 145–168 (KDADFRYQDLKLQAWKIGSDQSVD) lie on the Lumenal side of the membrane. Residues 169–189 (LTFIFGICILVLSSFTSSLLS) traverse the membrane as a helical segment. Over 190–253 (AYNERTYQKY…GGKILVPREE (64 aa)) the chain is Cytoplasmic. A helical membrane pass occupies residues 254-274 (TLLLFNVLTQYFCVKGVNILA). At 275 to 307 (SKTNALTLSITLLVRKFISLLLSVRLFDNNLSY) the chain is on the lumenal side. Residues 308 to 328 (TGYIGVYLVFFGAFIYSLGSI) traverse the membrane as a helical segment. The Cytoplasmic segment spans residues 329–342 (HPRQNDKGAIKKSK).

It belongs to the nucleotide-sugar transporter family. SLC35B subfamily.

It localises to the endoplasmic reticulum. The protein resides in the endoplasmic reticulum membrane. Sugar transporter that specifically mediates the transport of UDP-N-acetylglucosamine (UDP-GlcNAc) and is required for cell wall chitin synthesis. This is UDP-N-acetylglucosamine transporter YEA4 (YEA4) from Saccharomyces cerevisiae (strain ATCC 204508 / S288c) (Baker's yeast).